Reading from the N-terminus, the 232-residue chain is Ribosomal RNA large subunit methyltransferase E (232 aa).

Gly64, Trp66, Asp97, Asp113, and Asp138 together coordinate S-adenosyl-L-methionine. Lys178 serves as the catalytic Proton acceptor.

This sequence belongs to the class I-like SAM-binding methyltransferase superfamily. RNA methyltransferase RlmE family.

It is found in the cytoplasm. It carries out the reaction uridine(2552) in 23S rRNA + S-adenosyl-L-methionine = 2'-O-methyluridine(2552) in 23S rRNA + S-adenosyl-L-homocysteine + H(+). In terms of biological role, specifically methylates the uridine in position 2552 of 23S rRNA at the 2'-O position of the ribose in the fully assembled 50S ribosomal subunit. The sequence is that of Ribosomal RNA large subunit methyltransferase E from Leptothrix cholodnii (strain ATCC 51168 / LMG 8142 / SP-6) (Leptothrix discophora (strain SP-6)).